The following is a 353-amino-acid chain: Nicotinate-nucleotide--dimethylbenzimidazole phosphoribosyltransferase (353 aa).

Glu319 (proton acceptor) is an active-site residue.

It belongs to the CobT family.

It catalyses the reaction 5,6-dimethylbenzimidazole + nicotinate beta-D-ribonucleotide = alpha-ribazole 5'-phosphate + nicotinate + H(+). Its pathway is nucleoside biosynthesis; alpha-ribazole biosynthesis; alpha-ribazole from 5,6-dimethylbenzimidazole: step 1/2. Its function is as follows. Catalyzes the synthesis of alpha-ribazole-5'-phosphate from nicotinate mononucleotide (NAMN) and 5,6-dimethylbenzimidazole (DMB). In Chlorobaculum parvum (strain DSM 263 / NCIMB 8327) (Chlorobium vibrioforme subsp. thiosulfatophilum), this protein is Nicotinate-nucleotide--dimethylbenzimidazole phosphoribosyltransferase.